Consider the following 240-residue polypeptide: Citrate synthase-lysine N-methyltransferase CSKMT, mitochondrial (240 aa).

Residues 1–21 constitute a mitochondrion transit peptide; that stretch reads MAALRRMLHLPRLTMGTCRPF.

Belongs to the methyltransferase superfamily.

It localises to the mitochondrion. The enzyme catalyses L-lysyl-[citrate synthase] + S-adenosyl-L-methionine = N(6)-methyl-L-lysyl-[citrate synthase] + S-adenosyl-L-homocysteine + H(+). The catalysed reaction is N(6)-methyl-L-lysyl-[citrate synthase] + S-adenosyl-L-methionine = N(6),N(6)-dimethyl-L-lysyl-[citrate synthase] + S-adenosyl-L-homocysteine + H(+). It carries out the reaction N(6),N(6)-dimethyl-L-lysyl-[citrate synthase] + S-adenosyl-L-methionine = N(6),N(6),N(6)-trimethyl-L-lysyl-[citrate synthase] + S-adenosyl-L-homocysteine + H(+). Citrate synthase-lysine methyltransferase activity is inhibited by S-adenosylhomocysteine (AdoHcy) and oxaloacetate (OAA). In terms of biological role, protein-lysine methyltransferase that selectively trimethylates citrate synthase (CS) in mitochondria. Seems to conduct trimethylation in a highly distributive manner rather than in a processive manner, and thus introduces a single methyl group per binding event. This Pongo abelii (Sumatran orangutan) protein is Citrate synthase-lysine N-methyltransferase CSKMT, mitochondrial.